Here is a 378-residue protein sequence, read N- to C-terminus: Lipid-A-disaccharide synthase (378 aa).

The protein belongs to the LpxB family.

The catalysed reaction is a lipid X + a UDP-2-N,3-O-bis[(3R)-3-hydroxyacyl]-alpha-D-glucosamine = a lipid A disaccharide + UDP + H(+). The protein operates within bacterial outer membrane biogenesis; LPS lipid A biosynthesis. Functionally, condensation of UDP-2,3-diacylglucosamine and 2,3-diacylglucosamine-1-phosphate to form lipid A disaccharide, a precursor of lipid A, a phosphorylated glycolipid that anchors the lipopolysaccharide to the outer membrane of the cell. The protein is Lipid-A-disaccharide synthase of Pseudomonas paraeruginosa (strain DSM 24068 / PA7) (Pseudomonas aeruginosa (strain PA7)).